We begin with the raw amino-acid sequence, 120 residues long: Large ribosomal subunit protein uL18 (120 aa).

The protein belongs to the universal ribosomal protein uL18 family. As to quaternary structure, part of the 50S ribosomal subunit; part of the 5S rRNA/L5/L18/L25 subcomplex. Contacts the 5S and 23S rRNAs.

This is one of the proteins that bind and probably mediate the attachment of the 5S RNA into the large ribosomal subunit, where it forms part of the central protuberance. This Maricaulis maris (strain MCS10) (Caulobacter maris) protein is Large ribosomal subunit protein uL18.